A 412-amino-acid polypeptide reads, in one-letter code: Translation initiation factor 2 subunit gamma (412 aa).

The 198-residue stretch at 8–205 (QAEMNIGMVG…AMYEHFEPPE (198 aa)) folds into the tr-type G domain. Residues 17-24 (GHVDHGKT) form a G1 region. Mg(2+) contacts are provided by D20, T24, G45, and S47. Residue 20-25 (DHGKTT) participates in GTP binding. The segment at 45-49 (GISIR) is G2. Zn(2+)-binding residues include C60, C63, C72, and C75. The tract at residues 89–92 (DSPG) is G3. Residues 145–148 (NKID) and 183–185 (SAQ) each bind GTP. Residues 145–148 (NKID) form a G4 region. Residues 183-185 (SAQ) form a G5 region.

This sequence belongs to the TRAFAC class translation factor GTPase superfamily. Classic translation factor GTPase family. EIF2G subfamily. Heterotrimer composed of an alpha, a beta and a gamma chain. Requires Mg(2+) as cofactor.

It catalyses the reaction GTP + H2O = GDP + phosphate + H(+). Functionally, eIF-2 functions in the early steps of protein synthesis by forming a ternary complex with GTP and initiator tRNA. The polypeptide is Translation initiation factor 2 subunit gamma (Methanopyrus kandleri (strain AV19 / DSM 6324 / JCM 9639 / NBRC 100938)).